An 84-amino-acid polypeptide reads, in one-letter code: Small ribosomal subunit protein bS18A (84 aa).

This sequence belongs to the bacterial ribosomal protein bS18 family. As to quaternary structure, part of the 30S ribosomal subunit. Forms a tight heterodimer with protein bS6.

Binds as a heterodimer with protein bS6 to the central domain of the 16S rRNA, where it helps stabilize the platform of the 30S subunit. This chain is Small ribosomal subunit protein bS18A (rpsR1), found in Mycobacterium bovis (strain ATCC BAA-935 / AF2122/97).